Consider the following 347-residue polypeptide: NADH-quinone oxidoreductase subunit H (347 aa).

Helical transmembrane passes span 25-45 (ILFM…VAAM), 95-115 (FMFT…FAII), 128-148 (IGIL…LFGG), 168-188 (ISYE…TGSF), 200-220 (GWYI…GVAV), 251-271 (FFIG…CLFF), 284-304 (FIPP…MFIL), and 324-344 (VCLP…LIFS).

This sequence belongs to the complex I subunit 1 family. NDH-1 is composed of 14 different subunits. Subunits NuoA, H, J, K, L, M, N constitute the membrane sector of the complex.

Its subcellular location is the cell inner membrane. The enzyme catalyses a quinone + NADH + 5 H(+)(in) = a quinol + NAD(+) + 4 H(+)(out). NDH-1 shuttles electrons from NADH, via FMN and iron-sulfur (Fe-S) centers, to quinones in the respiratory chain. The immediate electron acceptor for the enzyme in this species is believed to be ubiquinone. Couples the redox reaction to proton translocation (for every two electrons transferred, four hydrogen ions are translocated across the cytoplasmic membrane), and thus conserves the redox energy in a proton gradient. This subunit may bind ubiquinone. The polypeptide is NADH-quinone oxidoreductase subunit H (Psychrobacter arcticus (strain DSM 17307 / VKM B-2377 / 273-4)).